A 425-amino-acid polypeptide reads, in one-letter code: Decarboxylase flvG (425 aa).

Position 82 is an N6-(pyridoxal phosphate)lysine (Lys82). Residues Ser213, Gly250, and Glu281–Arg284 each bind pyridoxal 5'-phosphate. Phe331–Glu332 serves as a coordination point for substrate. The Proton donor; shared with dimeric partner role is filled by Cys365. Asp366 is a substrate binding site. Tyr395 is a pyridoxal 5'-phosphate binding site.

Belongs to the Orn/Lys/Arg decarboxylase class-II family. As to quaternary structure, homodimer. Only the dimer is catalytically active, as the active sites are constructed of residues from both monomers. The cofactor is pyridoxal 5'-phosphate.

It localises to the cytoplasm. The catalysed reaction is N(6),N(6)-dimethyl-L-lysine + H(+) = N,N-dimethyl-cadaverine + CO2. It participates in secondary metabolite biosynthesis; terpenoid biosynthesis. Its function is as follows. Decarboxylase; part of the gene cluster that mediates the biosynthesis of flavunoidine, an alkaloidal terpenoid with a tetracyclic cage-like core connected to dimethylcadaverine via a C-N bond and acylated with 5,5-dimethyl-L-pipecolate. The tetracyclic core is synthesized by the terpene cyclase flvE and the cytochrome P450 monooxygenase flvD. The terpene cyclase flvE catalyzes the cyclization of farnesyl pyrophosphate (FPP) to form (1R,4R,5S)-(+)-acoradiene and the cytochrome P450 monooxygenase flvD is then responsible for oxidative conversion of (1R,4R,5S)-(+)-acoradiene into the tetracyclic cage present in the final product flavunoidine. In parallel, the N-methyltransferase flvH dimethylates L-lysine to give N,N-dimethyl-L-Lysin which is decarboxylated by flvG to afford dimethylcadaverine. The terpene cyclase-like protein flvF is the enzyme that attaches the dimethylcadaverine precusor at the C-7 of the tetracyclic cage to yield pre-flavunoidine. The cytochrome monooxygenase flvC hydroxylates the C-10 position of pre-flavunoidine whereas the NRPS flvI acylates the terpenoid core at the hydroxylated C-10 with dimethylpipecolate to yield final flavunoidine. The bifunctional enzyme flvA and the dehydrogenase flvB are responsible for the synthesis of the dimethylpipecolate precursor. The PLP-dependent lyase domain of flvA might use L-O-acetyl-homoserine and alpha-keto-isovalerate to form an intermediary ketone that can cyclize intramolecularly to yield an imine. The imine can be reduced by flvB to yield the 6-carboxylated pipecolate. The C-terminal alpha-KG-dependent oxygenase domain of flvA is then proposed to catalyze the decarboxylation to yield dimethylpipecolate. The chain is Decarboxylase flvG from Aspergillus flavus (strain ATCC 200026 / FGSC A1120 / IAM 13836 / NRRL 3357 / JCM 12722 / SRRC 167).